The chain runs to 520 residues: 2-methylcitrate dehydratase, mitochondrial (520 aa).

A mitochondrion-targeting transit peptide spans Met-1–Ser-37.

It belongs to the PrpD family. As to quaternary structure, monomer.

It localises to the mitochondrion. It carries out the reaction (2S,3S)-2-methylcitrate = 2-methyl-cis-aconitate + H2O. It functions in the pathway organic acid metabolism; propanoate degradation. With respect to regulation, several bivalent metal ions, such as nickel, copper, zinc, mercury, and lead, inhibit the activity to some extent. Inhibited by structural analogs such as citrate, cis-aconitate, isocitrate, 2-methylisocitrate, tricarballylate and fluorocitrate, but not by trans-aconitate or adipate. Functionally, component of the methylcitrate cycle that catalyzes the dehydration of 2-methylcitrate to 2-methyl-cis-aconitate. The methylcitrate cycle is a metabolic pathway for the consumption of propionic acid. This Yarrowia lipolytica (strain CLIB 122 / E 150) (Yeast) protein is 2-methylcitrate dehydratase, mitochondrial.